The chain runs to 500 residues: Aldehyde dehydrogenase, mitochondrial (500 aa).

N6-acetyllysine is present on residues K35, K56, and K142. An NAD(+)-binding site is contributed by 245–250 (GSTEVG). E268 functions as the Proton acceptor in the catalytic mechanism. C302 acts as the Nucleophile in catalysis. K358, K366, K409, K411, K424, and K434 each carry N6-acetyllysine.

The protein belongs to the aldehyde dehydrogenase family. In terms of assembly, homotetramer. In terms of processing, in response to mitochondrial stress, the precursor protein is ubiquitinated by the SIFI complex in the cytoplasm before mitochondrial import, leading to its degradation. Within the SIFI complex, UBR4 initiates ubiquitin chain that are further elongated or branched by KCMF1.

It localises to the mitochondrion matrix. It carries out the reaction an aldehyde + NAD(+) + H2O = a carboxylate + NADH + 2 H(+). The protein operates within alcohol metabolism; ethanol degradation; acetate from ethanol: step 2/2. Functionally, required for clearance of cellular formaldehyde, a cytotoxic and carcinogenic metabolite that induces DNA damage. This Equus caballus (Horse) protein is Aldehyde dehydrogenase, mitochondrial (ALDH2).